The primary structure comprises 160 residues: Nucleotide-binding protein AHA_1129 (160 aa).

It belongs to the YajQ family.

Functionally, nucleotide-binding protein. The protein is Nucleotide-binding protein AHA_1129 of Aeromonas hydrophila subsp. hydrophila (strain ATCC 7966 / DSM 30187 / BCRC 13018 / CCUG 14551 / JCM 1027 / KCTC 2358 / NCIMB 9240 / NCTC 8049).